The following is a 476-amino-acid chain: Trigger factor (476 aa).

One can recognise a PPIase FKBP-type domain in the interval 174 to 261 (GDIAVVSFKG…LKDLKEKELP (88 aa)). Residues 436–476 (KENTTKTSKTTKNSKTTKATKTTKTTKTTKTSKTQNKKEKK) are disordered. The segment covering 440-469 (TKTSKTTKNSKTTKATKTTKTTKTTKTSKT) has biased composition (low complexity).

The protein belongs to the FKBP-type PPIase family. Tig subfamily.

It localises to the cytoplasm. The catalysed reaction is [protein]-peptidylproline (omega=180) = [protein]-peptidylproline (omega=0). Functionally, involved in protein export. Acts as a chaperone by maintaining the newly synthesized protein in an open conformation. Functions as a peptidyl-prolyl cis-trans isomerase. The chain is Trigger factor from Prochlorococcus marinus (strain MIT 9215).